We begin with the raw amino-acid sequence, 178 residues long: Caveolin-1 (178 aa).

The residue at position 2 (S2) is an N-acetylserine. S2 carries the post-translational modification Phosphoserine. Residues 2-94 (SGGKYVDSEG…WKASFTTFTV (93 aa)) form a required for homooligomerization region. At 2 to 104 (SGGKYVDSEG…TKYWFYRLLS (103 aa)) the chain is on the cytoplasmic side. At K5 the chain carries N6-acetyllysine; alternate. K5 is covalently cross-linked (Glycyl lysine isopeptide (Lys-Gly) (interchain with G-Cter in ubiquitin); alternate). Y6 is modified (phosphotyrosine). Phosphoserine is present on S9. Y14 is subject to Phosphotyrosine; by ABL1. Y25 bears the Phosphotyrosine mark. Residues K26, K39, K47, and K57 each participate in a glycyl lysine isopeptide (Lys-Gly) (interchain with G-Cter in ubiquitin) cross-link. Residues 82-94 (DGIWKASFTTFTV) are interaction with CAVIN3. Positions 105 to 125 (ALFGIPMALIWGIYFAILSFL) form an intramembrane region, helical. At 126–178 (HIWAVVPCIKSFLIEIQCISRVYSIYVHTFCDPLFEAIGKIFSSIRINMQKEI) the chain is on the cytoplasmic side. The interacts with SPRY1, SPRY2, SPRY3 and SPRY4 stretch occupies residues 131 to 142 (VPCIKSFLIEIQ). 3 S-palmitoyl cysteine lipidation sites follow: C133, C143, and C156. An interacts with SPRY1, SPRY2, and SPRY4 region spans residues 149–160 (SIYVHTFCDPLF). The tract at residues 167-178 (FSSIRINMQKEI) is interacts with SPRY1, SPRY2, SPRY3 and SPRY4.

This sequence belongs to the caveolin family. Homooligomer. Interacts with GLIPR2. Interacts with NOSTRIN. Interacts with SNAP25 and STX1A. Interacts (via the N-terminus) with DPP4; the interaction is direct. Interacts with CTNNB1, CDH1 and JUP. Interacts with PACSIN2; this interaction induces membrane tubulation. Interacts with SLC7A9. Interacts with BMX and BTK. Interacts with TGFBR1. Interacts with CAVIN3 (via leucine-zipper domain) in a cholesterol-sensitive manner. Interacts with CAVIN1. Interacts with EHD2 in a cholesterol-dependent manner. Forms a ternary complex with UBXN6 and VCP; mediates CAV1 targeting to lysosomes for degradation. Interacts with ABCG1; this interaction regulates ABCG1-mediated cholesterol efflux. Interacts with NEU3; this interaction enhances NEU3 sialidase activity within caveola. Interacts (via C-terminus) with SPRY1, SPRY2 (via C-terminus), SPRY3, and SPRY4. Interacts with IGFBP5; this interaction allows trafficking of IGFBP5 from the plasma membrane to the nucleus. In terms of processing, phosphorylated at Tyr-14 by ABL1 in response to oxidative stress. Ubiquitinated. Undergo monoubiquitination and multi- and/or polyubiquitination. Monoubiquitination of N-terminal lysines promotes integration in a ternary complex with UBXN6 and VCP which promotes oligomeric CAV1 targeting to lysosomes for degradation. Ubiquitinated by ZNRF1; leading to degradation and modulation of the TLR4-mediated immune response.

It localises to the golgi apparatus membrane. The protein resides in the cell membrane. It is found in the membrane. Its subcellular location is the caveola. The protein localises to the membrane raft. May act as a scaffolding protein within caveolar membranes. Forms a stable heterooligomeric complex with CAV2 that targets to lipid rafts and drives caveolae formation. Mediates the recruitment of CAVIN proteins (CAVIN1/2/3/4) to the caveolae. Interacts directly with G-protein alpha subunits and can functionally regulate their activity. Involved in the costimulatory signal essential for T-cell receptor (TCR)-mediated T-cell activation. Its binding to DPP4 induces T-cell proliferation and NF-kappa-B activation in a T-cell receptor/CD3-dependent manner. Recruits CTNNB1 to caveolar membranes and may regulate CTNNB1-mediated signaling through the Wnt pathway. Negatively regulates TGFB1-mediated activation of SMAD2/3 by mediating the internalization of TGFBR1 from membrane rafts leading to its subsequent degradation. Binds 20(S)-hydroxycholesterol (20(S)-OHC). The polypeptide is Caveolin-1 (CAV1) (Loxodonta africana (African elephant)).